The following is a 305-amino-acid chain: Mycothiol acetyltransferase (305 aa).

N-acetyltransferase domains follow at residues 10–153 and 156–305; these read DRLD…LVVP and ISLR…YARA. Glu38 serves as a coordination point for 1D-myo-inositol 2-(L-cysteinylamino)-2-deoxy-alpha-D-glucopyranoside. 82–84 serves as a coordination point for acetyl-CoA; it reads LAV. 1D-myo-inositol 2-(L-cysteinylamino)-2-deoxy-alpha-D-glucopyranoside is bound by residues Glu183, Lys225, and Glu238. Residues 242–244 and 249–255 contribute to the acetyl-CoA site; these read VAI and QGRGLGR. Tyr276 contacts 1D-myo-inositol 2-(L-cysteinylamino)-2-deoxy-alpha-D-glucopyranoside. Position 281–286 (281–286) interacts with acetyl-CoA; it reads NESALH.

This sequence belongs to the acetyltransferase family. MshD subfamily. In terms of assembly, monomer.

The enzyme catalyses 1D-myo-inositol 2-(L-cysteinylamino)-2-deoxy-alpha-D-glucopyranoside + acetyl-CoA = mycothiol + CoA + H(+). Functionally, catalyzes the transfer of acetyl from acetyl-CoA to desacetylmycothiol (Cys-GlcN-Ins) to form mycothiol. The polypeptide is Mycothiol acetyltransferase (Rhodococcus jostii (strain RHA1)).